Consider the following 246-residue polypeptide: tRNA (guanine-N(1)-)-methyltransferase (246 aa).

S-adenosyl-L-methionine-binding positions include G117 and 137–142 (IGDYVL).

The protein belongs to the RNA methyltransferase TrmD family. In terms of assembly, homodimer.

The protein localises to the cytoplasm. The catalysed reaction is guanosine(37) in tRNA + S-adenosyl-L-methionine = N(1)-methylguanosine(37) in tRNA + S-adenosyl-L-homocysteine + H(+). Functionally, specifically methylates guanosine-37 in various tRNAs. The polypeptide is tRNA (guanine-N(1)-)-methyltransferase (Acinetobacter baumannii (strain SDF)).